A 518-amino-acid polypeptide reads, in one-letter code: Xylose import ATP-binding protein XylG (518 aa).

ABC transporter domains follow at residues 6-245 (LQMN…VGRE) and 262-507 (FEAR…LSHS). 38–45 (GENGAGKS) contributes to the ATP binding site.

This sequence belongs to the ABC transporter superfamily. Xylose importer (TC 3.A.1.2.4) family. In terms of assembly, the complex is composed of two ATP-binding proteins (XylG), two transmembrane proteins (XylH) and a solute-binding protein (XylF).

The protein localises to the cell inner membrane. It carries out the reaction D-xylose(out) + ATP + H2O = D-xylose(in) + ADP + phosphate + H(+). Its function is as follows. Part of the ABC transporter complex XylFGH involved in xylose import. Responsible for energy coupling to the transport system. This Pseudomonas syringae pv. syringae (strain B728a) protein is Xylose import ATP-binding protein XylG.